Here is a 536-residue protein sequence, read N- to C-terminus: GATA zinc finger domain-containing protein 9 (536 aa).

2 stretches are compositionally biased toward polar residues: residues 1–20 and 36–55; these read MTSF…QPHS and CQSS…NPNA. Disordered stretches follow at residues 1–77, 183–211, 237–258, 273–342, and 370–423; these read MTSF…LSGS, SSSL…VVRS, RSAF…GGGS, QLHY…GFVQ, and ALFS…NISS. Residues 56–72 are compositionally biased toward low complexity; it reads TTNNTTTTTTTTTTTTN. The span at 188-206 shows a compositional bias: acidic residues; that stretch reads SEDDDCCYETEEDDNGEDG. Residues 237-247 are compositionally biased toward basic residues; it reads RSAFKKNKKDY. The span at 273–283 shows a compositional bias: polar residues; the sequence is QLHYSNSMTDN. 2 stretches are compositionally biased toward low complexity: residues 318–335 and 379–399; these read SNSN…NNNN and PSPT…NSGN. The segment at 479–504 adopts a GATA-type zinc-finger fold; the sequence is CRHCGTTDTPEWRRGPDGRKSLCNAC.

This chain is GATA zinc finger domain-containing protein 9 (gtaI), found in Dictyostelium discoideum (Social amoeba).